The chain runs to 341 residues: Phosphate acyltransferase (341 aa).

This sequence belongs to the PlsX family. In terms of assembly, homodimer. Probably interacts with PlsY.

The protein localises to the cytoplasm. The enzyme catalyses a fatty acyl-[ACP] + phosphate = an acyl phosphate + holo-[ACP]. The protein operates within lipid metabolism; phospholipid metabolism. Catalyzes the reversible formation of acyl-phosphate (acyl-PO(4)) from acyl-[acyl-carrier-protein] (acyl-ACP). This enzyme utilizes acyl-ACP as fatty acyl donor, but not acyl-CoA. This chain is Phosphate acyltransferase, found in Vibrio cholerae serotype O1 (strain ATCC 39541 / Classical Ogawa 395 / O395).